We begin with the raw amino-acid sequence, 533 residues long: Quinate permease (533 aa).

Residues 1–21 (MSILALVEDRPTPREVYNWRV) are Cytoplasmic-facing. A helical membrane pass occupies residues 22 to 42 (YLLAAVASFTSCMIGYDSAFI). Over 43-67 (GTTLSLQSFQNEFNWESLNTDLISA) the chain is Extracellular. The chain crosses the membrane as a helical span at residues 68-88 (NIVSLYQAGAFFGALFAYPIG). The Cytoplasmic portion of the chain corresponds to 89–94 (HFWGRR). Residues 95 to 115 (WGLMFSALIFFLGAGMMLGAN) traverse the membrane as a helical segment. The Extracellular portion of the chain corresponds to 116–127 (GDRGLGLIYGGR). The chain crosses the membrane as a helical span at residues 128–148 (VLAGIGVGAGSNICPIYISEM). Topologically, residues 149–156 (APPAIRGR) are cytoplasmic. Residues 157 to 177 (LVGVYELGWQIGGVVGFWINY) traverse the membrane as a helical segment. Topologically, residues 178–191 (GVDETLAPSHKQWI) are extracellular. The chain crosses the membrane as a helical span at residues 192-212 (IPFAVQLIPAGLLIIGALLIR). The Cytoplasmic segment spans residues 213 to 282 (ESPRWLFLRG…AWTNKRILYR (70 aa)). Residues 283 to 303 (LFLGSMLFLWQNGSGINAINY) form a helical membrane-spanning segment. Over 304–324 (YSPRVFKSIGVSGGNTSLLTT) the chain is Extracellular. The chain crosses the membrane as a helical span at residues 325–346 (GIFGVVKAVITFVWLLYLIDHF). At 347 to 349 (GRR) the chain is on the cytoplasmic side. Residues 350–370 (NLLLVGAAGGSVCLWIVGGYI) traverse the membrane as a helical segment. The Extracellular segment spans residues 371-385 (KIAKPENNPEGTQLD). Residues 386–406 (SGGIAAIFFFYLWTAFYTPSW) traverse the membrane as a helical segment. At 407 to 431 (NGTPWVINSEMFDPTVRSLAQACAA) the chain is on the cytoplasmic side. Residues 432–452 (ASNWLWNFLISRFTPQMFTSM) traverse the membrane as a helical segment. Residues 453-454 (GY) lie on the Extracellular side of the membrane. Residues 455 to 475 (GVYFFFASLMILSIVFVFFLI) traverse the membrane as a helical segment. The Cytoplasmic portion of the chain corresponds to 476–533 (PETKGVPLESMETLFDKKPVWHAHSQLIRELRENEEAFRADMGASGKGGVTKEYVEEA).

Belongs to the major facilitator superfamily. Sugar transporter (TC 2.A.1.1) family. Interacts with creB. Ubiquitinated. Deubiquitinated by creB, probably to control its activity or amount.

It localises to the cell membrane. Functionally, integral membrane transporter that imports quinic acid to be catabolized as a carbon source. In Emericella nidulans (strain FGSC A4 / ATCC 38163 / CBS 112.46 / NRRL 194 / M139) (Aspergillus nidulans), this protein is Quinate permease (qutD).